The chain runs to 128 residues: Aspartate 1-decarboxylase (128 aa).

Catalysis depends on Ser25, which acts as the Schiff-base intermediate with substrate; via pyruvic acid. The residue at position 25 (Ser25) is a Pyruvic acid (Ser). Thr57 is a binding site for substrate. Tyr58 acts as the Proton donor in catalysis. 73-75 (GSA) is a binding site for substrate.

The protein belongs to the PanD family. In terms of assembly, heterooctamer of four alpha and four beta subunits. Pyruvate is required as a cofactor. Post-translationally, is synthesized initially as an inactive proenzyme, which is activated by self-cleavage at a specific serine bond to produce a beta-subunit with a hydroxyl group at its C-terminus and an alpha-subunit with a pyruvoyl group at its N-terminus.

It is found in the cytoplasm. The enzyme catalyses L-aspartate + H(+) = beta-alanine + CO2. Its pathway is cofactor biosynthesis; (R)-pantothenate biosynthesis; beta-alanine from L-aspartate: step 1/1. Functionally, catalyzes the pyruvoyl-dependent decarboxylation of aspartate to produce beta-alanine. The sequence is that of Aspartate 1-decarboxylase from Burkholderia vietnamiensis (strain G4 / LMG 22486) (Burkholderia cepacia (strain R1808)).